A 495-amino-acid chain; its full sequence is Probable cobyric acid synthase (495 aa).

The GATase cobBQ-type domain occupies 256 to 441 (DVDIAVIRLT…LHGLFDNVNI (186 aa)). Catalysis depends on Cys-334, which acts as the Nucleophile. His-433 is a catalytic residue.

The protein belongs to the CobB/CobQ family. CobQ subfamily.

It functions in the pathway cofactor biosynthesis; adenosylcobalamin biosynthesis. Its function is as follows. Catalyzes amidations at positions B, D, E, and G on adenosylcobyrinic A,C-diamide. NH(2) groups are provided by glutamine, and one molecule of ATP is hydrogenolyzed for each amidation. The sequence is that of Probable cobyric acid synthase from Methanococcoides burtonii (strain DSM 6242 / NBRC 107633 / OCM 468 / ACE-M).